The sequence spans 264 residues: MGQTALARGSSSTPTSQALYSDFSPPEGLEELLSAPPPDLVAQRHHGWNPKDCSENIDVKEGGLCFERRPVAQSTDGVRGKRGYSRGLHAWEISWPLEQRGTHAVVGVATALAPLQADHYAALLGSNSESWGWDIGRGKLYHQSKGLEAPQYPAGPQGEQLVVPERLLVVLDMEEGTLGYSIGGTYLGPAFRGLKGRTLYPSVSAVWGQCQVRIRYMGERRVEEPQSLLHLSRLCVRHALGDTRLGQISTLPLPPAMKRYLLYK.

Polar residues predominate over residues 1–19; sequence MGQTALARGSSSTPTSQAL. A disordered region spans residues 1-34; that stretch reads MGQTALARGSSSTPTSQALYSDFSPPEGLEELLS. The B30.2/SPRY domain occupies 26–221; sequence PEGLEELLSA…VRIRYMGERR (196 aa). The SOCS box domain maps to 222–264; it reads VEEPQSLLHLSRLCVRHALGDTRLGQISTLPLPPAMKRYLLYK.

The protein belongs to the SPSB family. Component of the probable ECS(SPSB2) E3 ubiquitin-protein ligase complex which contains CUL5, RNF7/RBX2, Elongin BC complex and SPSB2. Interacts with CUL5, RNF7, ELOB and ELOC. Interacts with MET. Interacts (via B30.2/SPRY domain) with PAWR; this interaction occurs in association with the Elongin BC complex. Interacts with NOS2.

The protein resides in the cytoplasm. It is found in the cytosol. Its pathway is protein modification; protein ubiquitination. In terms of biological role, substrate recognition component of a SCF-like ECS (Elongin BC-CUL2/5-SOCS-box protein) E3 ubiquitin-protein ligase complex which mediates the ubiquitination and subsequent proteasomal degradation of target proteins. Negatively regulates nitric oxide (NO) production and limits cellular toxicity in activated macrophages by mediating the ubiquitination and proteasomal degradation of NOS2. Acts as a bridge which links NOS2 with the ECS E3 ubiquitin ligase complex components ELOC and CUL5. The sequence is that of SPRY domain-containing SOCS box protein 2 (Spsb2) from Mus musculus (Mouse).